The chain runs to 462 residues: Cysteine--tRNA ligase (462 aa).

Cys24 contacts Zn(2+). A 'HIGH' region motif is present at residues 26 to 36 (PTVYDDAHLGH). The Zn(2+) site is built by Cys199, His224, and Glu228. The short motif at 256 to 260 (KMSKS) is the 'KMSKS' region element. Lys259 contacts ATP.

It belongs to the class-I aminoacyl-tRNA synthetase family. In terms of assembly, monomer. Zn(2+) serves as cofactor.

It localises to the cytoplasm. It carries out the reaction tRNA(Cys) + L-cysteine + ATP = L-cysteinyl-tRNA(Cys) + AMP + diphosphate. The chain is Cysteine--tRNA ligase (cysS) from Campylobacter jejuni subsp. jejuni serotype O:2 (strain ATCC 700819 / NCTC 11168).